Consider the following 37-residue polypeptide: GKFSGFAKILKSIAKFFKGVGKVRKQFKEASDLDKNQ.

In terms of tissue distribution, expressed by the venom gland.

The protein resides in the secreted. Functionally, disrupts biological membranes, particularly those rich in phosphocholine. Has antimicrobial activity against Gram-negative bacterium E.coli, Gram-positive bacteria B.subtilis and S.aureus, and hemolytic activity against sheep, pig and guinea pig red blood cells. Has insecticidal activity against S.frugiperda ovarian cells by opening non-selective ion channels. Enhances the insecticidal activity of spider venom neurotoxic peptides. The protein is M-oxotoxin-Ot2b of Oxyopes takobius (Lynx spider).